The primary structure comprises 531 residues: Light-independent protochlorophyllide reductase subunit B (531 aa).

Asp-36 is a binding site for [4Fe-4S] cluster. The active-site Proton donor is Asp-296. Residue 431-432 participates in substrate binding; sequence GM.

It belongs to the ChlB/BchB/BchZ family. In terms of assembly, protochlorophyllide reductase is composed of three subunits; ChlL, ChlN and ChlB. Forms a heterotetramer of two ChlB and two ChlN subunits. The cofactor is [4Fe-4S] cluster.

Its subcellular location is the plastid. The protein localises to the chloroplast. It carries out the reaction chlorophyllide a + oxidized 2[4Fe-4S]-[ferredoxin] + 2 ADP + 2 phosphate = protochlorophyllide a + reduced 2[4Fe-4S]-[ferredoxin] + 2 ATP + 2 H2O. It functions in the pathway porphyrin-containing compound metabolism; chlorophyll biosynthesis (light-independent). Its function is as follows. Component of the dark-operative protochlorophyllide reductase (DPOR) that uses Mg-ATP and reduced ferredoxin to reduce ring D of protochlorophyllide (Pchlide) to form chlorophyllide a (Chlide). This reaction is light-independent. The NB-protein (ChlN-ChlB) is the catalytic component of the complex. The protein is Light-independent protochlorophyllide reductase subunit B of Nephroselmis olivacea (Green alga).